The following is a 675-amino-acid chain: E3 ubiquitin-protein ligase COP1 (675 aa).

A disordered region spans residues Met-1–Glu-40. Cys-52, Cys-55, Cys-67, His-69, Cys-72, Cys-75, Cys-86, and Cys-89 together coordinate Zn(2+). An RING-type zinc finger spans residues Cys-52–Ser-90. Positions Cys-67–Gln-177 are CLS (cytoplasmic localization signal). Residues Ala-120–Gln-177 are SNLS (subnuclear localization signal). Residues Cys-134–Arg-201 are a coiled coil. The tract at residues Glu-261–Val-290 is disordered. The segment covering Gly-279–Val-290 has biased composition (polar residues). Positions Arg-294 to Ala-317 match the Bipartite nuclear localization signal motif. WD repeat units lie at residues His-369–Ala-408, Ser-418–Glu-458, Glu-461–Asn-501, Asp-503–His-543, Gly-547–Thr-585, Gly-588–Ser-627, and Ala-642–Ala-675. Residues Lys-593–Phe-595 are binding of human TRIB1 COP1-binding-motif.

Homodimer. Interacts with HY5, HYH, BBX24/STO, BBX25/STH, CIP8, COP10, SPA1, SPA2, SPA3, SPA4 and UVR8 and phosphorylated PHYA. Light induces dissociation of the SPA1/COP1 complex. Interacts with HRT/RPP8 and triggers it to the 26s proteasome. Binds to CRY2; this competitive interaction prevents triggering to proteasome of other binding proteins. Binds to SHW1 in the nucleus. Bonds to CIP7. Interacts with CSU2. Binds to CIP1. Interacts directly with DHU1. Associates to UNE10/PIF8. Binds directly to PCH1 and PCHL. Post-translationally, autoubiquitinated.

Its subcellular location is the nucleus. The protein resides in the cytoplasm. The enzyme catalyses S-ubiquitinyl-[E2 ubiquitin-conjugating enzyme]-L-cysteine + [acceptor protein]-L-lysine = [E2 ubiquitin-conjugating enzyme]-L-cysteine + N(6)-ubiquitinyl-[acceptor protein]-L-lysine.. It functions in the pathway protein modification; protein ubiquitination. Functionally, E3 ubiquitin-protein ligase that acts as a repressor of photomorphogenesis and as an activator of etiolation in darkness. E3 ubiquitin ligases accept ubiquitin from an E2 ubiquitin-conjugating enzyme in the form of a thioester and then directly transfers the ubiquitin to targeted substrates. Represses photomorphogenesis in darkness by mediating ubiquitination and subsequent proteasomal degradation of light-induced transcription factors such as HY5, HYH and LAF1. Down-regulates MYB21, probably via ubiquitination process. Light stimuli abrogate the repression of photomorphogenesis, possibly due to its localization to the cytoplasm. Could play a role in switching between skotomorphogenetic and photomorphogenetic pathways. Mediates the ubiquitination-dependent degradation of HY5 in the darkness during seedling development (e.g. hypocotyl growth). Represses CIP7 in darkness. Triggers ubiquitination and subsequent protein degradation of UNE10/PIF8, PCH1 and PCHL in the dark. This is E3 ubiquitin-protein ligase COP1 from Arabidopsis thaliana (Mouse-ear cress).